A 200-amino-acid polypeptide reads, in one-letter code: Large ribosomal subunit protein uL4 (200 aa).

The disordered stretch occupies residues 42 to 69 (SKAQKNRSDVSGGGRKPWRQKGTGRARA).

Belongs to the universal ribosomal protein uL4 family. As to quaternary structure, part of the 50S ribosomal subunit.

Its function is as follows. One of the primary rRNA binding proteins, this protein initially binds near the 5'-end of the 23S rRNA. It is important during the early stages of 50S assembly. It makes multiple contacts with different domains of the 23S rRNA in the assembled 50S subunit and ribosome. Functionally, forms part of the polypeptide exit tunnel. In Alcanivorax borkumensis (strain ATCC 700651 / DSM 11573 / NCIMB 13689 / SK2), this protein is Large ribosomal subunit protein uL4.